The following is a 473-amino-acid chain: Ion-translocating oxidoreductase complex subunit C (473 aa).

4Fe-4S ferredoxin-type domains are found at residues 328–357 (KNES…QQLY) and 368–396 (TKKH…VKYF). [4Fe-4S] cluster contacts are provided by Cys337, Cys340, Cys343, Cys347, Cys376, Cys379, Cys382, and Cys386.

It belongs to the 4Fe4S bacterial-type ferredoxin family. RnfC subfamily. The complex is composed of six subunits: RnfA, RnfB, RnfC, RnfD, RnfE and RnfG. It depends on [4Fe-4S] cluster as a cofactor.

Its subcellular location is the cell inner membrane. Its function is as follows. Part of a membrane-bound complex that couples electron transfer with translocation of ions across the membrane. This chain is Ion-translocating oxidoreductase complex subunit C, found in Buchnera aphidicola subsp. Acyrthosiphon pisum (strain APS) (Acyrthosiphon pisum symbiotic bacterium).